Reading from the N-terminus, the 281-residue chain is Proteasome subunit beta 2 (281 aa).

Positions 1-53 are cleaved as a propeptide — removed in mature form; by autocatalysis; that stretch reads MEANTRSTGRLPAAFLTPGSSSFMDFLSEHQPEILPGNRQLPPTQGVIEAPHG. Threonine 54 acts as the Nucleophile in catalysis.

Belongs to the peptidase T1B family. The 20S proteasome core is composed of 14 alpha and 14 beta subunits that assemble into four stacked heptameric rings, resulting in a barrel-shaped structure. The two inner rings, each composed of seven catalytic beta subunits, are sandwiched by two outer rings, each composed of seven alpha subunits. The catalytic chamber with the active sites is on the inside of the barrel. Has a gated structure, the ends of the cylinder being occluded by the N-termini of the alpha-subunits. Is capped by the proteasome-associated ATPase, ARC.

The protein resides in the cytoplasm. The enzyme catalyses Cleavage of peptide bonds with very broad specificity.. It functions in the pathway protein degradation; proteasomal Pup-dependent pathway. With respect to regulation, the formation of the proteasomal ATPase ARC-20S proteasome complex, likely via the docking of the C-termini of ARC into the intersubunit pockets in the alpha-rings, may trigger opening of the gate for substrate entry. Interconversion between the open-gate and close-gate conformations leads to a dynamic regulation of the 20S proteasome proteolysis activity. Functionally, component of the proteasome core, a large protease complex with broad specificity involved in protein degradation. This chain is Proteasome subunit beta 2, found in Streptomyces avermitilis (strain ATCC 31267 / DSM 46492 / JCM 5070 / NBRC 14893 / NCIMB 12804 / NRRL 8165 / MA-4680).